The primary structure comprises 480 residues: Probable cyclodipeptide synthase PUL1 (480 aa).

It functions in the pathway siderophore biosynthesis. Its function is as follows. Probable cyclodipeptide synthase; part of the PUL gene cluster that mediates the formation of pulcherrimin, a red iron-containing pigment composed of two cyclized and modified leucine molecules that acts as a siderophore, a chelator that binds iron outside the cell for subsequent uptake. Two leucine molecules are cyclized via a cyclodipeptide synthase, and the resulting diketopiperazine is oxidized by a cytochrome P450 monooxygenase to generate pulcherriminic acid (PA), which can then spontaneously bind iron to form pulcherrimin. The probable cyclodipeptide synthase PUL1 and the cytochrome P450 monooxygenase PUL2 encode the enzymes responsible for the two-step pulcherrimin biosynthesis pathway. The sequence is that of Probable cyclodipeptide synthase PUL1 from Kluyveromyces lactis (strain ATCC 8585 / CBS 2359 / DSM 70799 / NBRC 1267 / NRRL Y-1140 / WM37) (Yeast).